A 336-amino-acid polypeptide reads, in one-letter code: Homoserine dehydrogenase (336 aa).

Phe8 provides a ligand contact to NADPH. NAD(+) contacts are provided by Ala10, Ile11, and Thr94. The NADPH site is built by Ile11, Thr94, and Lys123. NADP(+) is bound by residues Ile11, Thr94, and Lys123. Residues Glu147, Val150, and Gly152 each contribute to the Na(+) site. Residues Gly205 and Glu208 each coordinate NADP(+). Positions 208 and 219 each coordinate L-homoserine. Lys223 serves as the catalytic Proton donor. Residue Gly315 participates in NADPH binding. Gly315 is an NAD(+) binding site. Gly315 lines the NADP(+) pocket.

This sequence belongs to the homoserine dehydrogenase family. A metal cation serves as cofactor.

The catalysed reaction is L-homoserine + NADP(+) = L-aspartate 4-semialdehyde + NADPH + H(+). It carries out the reaction L-homoserine + NAD(+) = L-aspartate 4-semialdehyde + NADH + H(+). It functions in the pathway amino-acid biosynthesis; L-methionine biosynthesis via de novo pathway; L-homoserine from L-aspartate: step 3/3. The protein operates within amino-acid biosynthesis; L-threonine biosynthesis; L-threonine from L-aspartate: step 3/5. Functionally, catalyzes the conversion of L-aspartate-beta-semialdehyde (L-Asa) to L-homoserine (L-Hse), the third step in the biosynthesis of threonine and methionine from aspartate. This chain is Homoserine dehydrogenase (hom), found in Methanocaldococcus jannaschii (strain ATCC 43067 / DSM 2661 / JAL-1 / JCM 10045 / NBRC 100440) (Methanococcus jannaschii).